The following is a 413-amino-acid chain: Ribulose bisphosphate carboxylase/oxygenase activase, chloroplastic (413 aa).

The N-terminal 54 residues, 1 to 54 (MAATVSTIGAVNRTTLNNSNYGGLVPNSAFLGSRLKVSSRFTTSKMVTGNFKIV), are a transit peptide targeting the chloroplast. 162–169 (GGKGQGKS) contributes to the ATP binding site.

Belongs to the RuBisCO activase family.

It localises to the plastid. The protein localises to the chloroplast stroma. Its function is as follows. Activation of RuBisCO (ribulose-1,5-bisphosphate carboxylase/oxygenase; EC 4.1.1.39) involves the ATP-dependent carboxylation of the epsilon-amino group of lysine leading to a carbamate structure. The sequence is that of Ribulose bisphosphate carboxylase/oxygenase activase, chloroplastic from Cucumis sativus (Cucumber).